The chain runs to 939 residues: Isoleucine--tRNA ligase (939 aa).

Residues 57-67 (PYANGHIHIGH) carry the 'HIGH' region motif. Residue glutamate 563 coordinates L-isoleucyl-5'-AMP. Residues 604–608 (KMSKS) carry the 'KMSKS' region motif. Lysine 607 contributes to the ATP binding site. Cysteine 903, cysteine 906, cysteine 921, and cysteine 924 together coordinate Zn(2+).

It belongs to the class-I aminoacyl-tRNA synthetase family. IleS type 1 subfamily. As to quaternary structure, monomer. It depends on Zn(2+) as a cofactor.

It is found in the cytoplasm. The catalysed reaction is tRNA(Ile) + L-isoleucine + ATP = L-isoleucyl-tRNA(Ile) + AMP + diphosphate. Its function is as follows. Catalyzes the attachment of isoleucine to tRNA(Ile). As IleRS can inadvertently accommodate and process structurally similar amino acids such as valine, to avoid such errors it has two additional distinct tRNA(Ile)-dependent editing activities. One activity is designated as 'pretransfer' editing and involves the hydrolysis of activated Val-AMP. The other activity is designated 'posttransfer' editing and involves deacylation of mischarged Val-tRNA(Ile). This Sulfurihydrogenibium sp. (strain YO3AOP1) protein is Isoleucine--tRNA ligase.